Here is a 767-residue protein sequence, read N- to C-terminus: AMP deaminase 3 (767 aa).

Phosphoserine is present on residues serine 85 and serine 107. Disordered stretches follow at residues 89 to 111 (QMPP…PTTP) and 181 to 205 (LGHP…PLPQ). 2 residues coordinate Zn(2+): histidine 317 and histidine 319. Substrate is bound by residues histidine 319 and 388–393 (KFNSKY). Residue histidine 586 coordinates Zn(2+). A substrate-binding site is contributed by glutamate 589. Histidine 608 acts as the Proton acceptor in catalysis. Aspartate 663 serves as a coordination point for Zn(2+). A substrate-binding site is contributed by 664–667 (DPMQ).

The protein belongs to the metallo-dependent hydrolases superfamily. Adenosine and AMP deaminases family. Homotetramer. Requires Zn(2+) as cofactor.

The catalysed reaction is AMP + H2O + H(+) = IMP + NH4(+). Its pathway is purine metabolism; IMP biosynthesis via salvage pathway; IMP from AMP: step 1/1. Its function is as follows. AMP deaminase plays a critical role in energy metabolism. The sequence is that of AMP deaminase 3 from Homo sapiens (Human).